A 420-amino-acid polypeptide reads, in one-letter code: UDP-glucuronic acid decarboxylase 1 (420 aa).

Methionine 1 carries the post-translational modification N-acetylmethionine. Over 1–19 the chain is Cytoplasmic; that stretch reads MVSKALLRLVSAVNRRRMK. Residues 20–40 traverse the membrane as a helical; Signal-anchor for type II membrane protein segment; it reads LLLGIALLAYVASVWGNFVNM. The Lumenal segment spans residues 41-420; sequence RSIQENGELK…RIKKGRTRHS (380 aa). Threonine 94 carries the phosphothreonine modification. 10 residues coordinate NAD(+): glycine 98, phenylalanine 99, valine 100, aspartate 119, asparagine 120, phenylalanine 122, threonine 123, glycine 124, aspartate 144, and valine 145. UDP-alpha-D-glucuronate-binding residues include leucine 149 and tyrosine 150. The NAD(+) site is built by leucine 159 and serine 161. Residue lysine 177 participates in UDP-alpha-D-glucuronate binding. Threonine 178 lines the NAD(+) pocket. 4 residues coordinate UDP-alpha-D-glucuronate: asparagine 185, glycine 188, lysine 191, and arginine 192. NAD(+) contacts are provided by alanine 200, tyrosine 231, and lysine 235. Tyrosine 231 functions as the Proton acceptor in the catalytic mechanism. UDP-alpha-D-glucuronate contacts are provided by tyrosine 245, glutamine 248, and glutamate 249. Residues threonine 261, histidine 267, and arginine 272 each coordinate NAD(+). Asparagine 316 is a glycosylation site (N-linked (GlcNAc...) asparagine).

This sequence belongs to the NAD(P)-dependent epimerase/dehydratase family. UDP-glucuronic acid decarboxylase subfamily. Homodimer and homotetramer. Interacts with AKT1. The cofactor is NAD(+).

It is found in the golgi apparatus. Its subcellular location is the golgi stack membrane. It carries out the reaction UDP-alpha-D-glucuronate + H(+) = UDP-alpha-D-xylose + CO2. Its pathway is nucleotide-sugar biosynthesis; UDP-alpha-D-xylose biosynthesis; UDP-alpha-D-xylose from UDP-alpha-D-glucuronate: step 1/1. Functionally, catalyzes the NAD-dependent decarboxylation of UDP-glucuronic acid to UDP-xylose. Necessary for the biosynthesis of the core tetrasaccharide in glycosaminoglycan biosynthesis. The polypeptide is UDP-glucuronic acid decarboxylase 1 (Homo sapiens (Human)).